The primary structure comprises 370 residues: Prolactin-releasing peptide receptor (370 aa).

The Extracellular portion of the chain corresponds to 1–62 (MASLPTQGPA…LQLVHQLKGL (62 aa)). Asn-27 and Asn-36 each carry an N-linked (GlcNAc...) asparagine glycan. The helical transmembrane segment at 63-83 (IVLLYSIVVVVGLVGNCLLVL) threads the bilayer. Residues 84 to 101 (VIARVRRLHNVTNFLIGN) are Cytoplasmic-facing. The helical transmembrane segment at 102–122 (LALSDVLMCTACVPLTLAYAF) threads the bilayer. The Extracellular portion of the chain corresponds to 123–126 (EPRG). A helical transmembrane segment spans residues 127–147 (WVFGGGLCHLVFFLQPVTVYV). Cys-134 and Cys-211 are joined by a disulfide. Topologically, residues 148–175 (SVFTLTTIAVDRYVVLVHPLRRRISLRF) are cytoplasmic. Residues 176 to 196 (SAYAVLAIWALSAVLALPAAL) form a helical membrane-spanning segment. Residues 197–225 (HTYHVELKPHRVRLCEEFWGSQERQRQLY) are Extracellular-facing. The chain crosses the membrane as a helical span at residues 226 to 246 (AWGLLLVTYLLPLLVILLSYV). Residues 247 to 276 (RVSVNLRNRVVPGCVTQSQADWDRARRRRT) lie on the Cytoplasmic side of the membrane. The helical transmembrane segment at 277 to 297 (FCLLVVVVVVFAVCWLPLHVF) threads the bilayer. The Extracellular segment spans residues 298–317 (NLLRDLDPHAIDPYAFGLVQ). Residues 318 to 338 (LLCHWLAMSSACYNPFIYAWL) form a helical membrane-spanning segment. The Cytoplasmic portion of the chain corresponds to 339-369 (HDSFREELRKLLLAWPRKIAPHGQSMTVSVV). The interval 365-370 (TVSVVI) is required for interaction with GRIP1, GRIP2 and PICK1.

Belongs to the G-protein coupled receptor 1 family. As to quaternary structure, interacts through its C-terminal region with the PDZ domain-containing proteins GRIP1, GRIP2 and PICK1. Interacts with PDZ domains 4 and 5 of GRIP1 and with the PDZ domain of PICK1.

Its subcellular location is the cell membrane. Receptor for prolactin-releasing peptide (PrRP). Implicated in lactation, regulation of food intake and pain-signal processing. The sequence is that of Prolactin-releasing peptide receptor (PRLHR) from Bos taurus (Bovine).